A 1304-amino-acid polypeptide reads, in one-letter code: Myosin-1 (1304 aa).

Over residues 1–12 (MAIVKRGVRTKN) the composition is skewed to basic residues. The interval 1–24 (MAIVKRGVRTKNKQSQQPSKSGIK) is disordered. Positions 36 to 730 (VGVSDLTLLS…TLFALEDMRD (695 aa)) constitute a Myosin motor domain. 129 to 136 (GESGAGKT) serves as a coordination point for ATP. Ser-364 is subject to Phosphoserine. The tract at residues 413–496 (SIGILDIYGF…PGLFAALNDS (84 aa)) is actin-binding. IQ domains lie at 734-754 (HNMA…KDDA) and 755-780 (ARLI…YGNG). The region spanning 788–978 (RRRMSMLGSR…TVTVRQGLPG (191 aa)) is the TH1 domain. 2 disordered regions span residues 963–1162 (DSYK…TYKA) and 1214–1304 (ECDP…DDDW). 2 stretches are compositionally biased toward polar residues: residues 964–983 (SYKS…SQNP) and 1001–1012 (RGSNMRSTSSYQ). Low complexity-rich tracts occupy residues 1029–1052 (QPPV…PQAQ), 1072–1096 (QPHA…PQAQ), and 1120–1140 (PSAP…KKNV). A compositionally biased stretch (pro residues) spans 1141 to 1156 (APPPPPAAASPPPKPK). The region spanning 1155 to 1217 (PKFPTYKAAY…PAAYVVECDP (63 aa)) is the SH3 domain. 2 stretches are compositionally biased toward low complexity: residues 1217–1227 (PPANSPAGNAK) and 1236–1256 (LNSA…NGAG). Residues 1292–1304 (DSDEEDEEDDDDW) show a composition bias toward acidic residues.

Belongs to the TRAFAC class myosin-kinesin ATPase superfamily. Myosin family. Phosphorylation of the TEDS site (Ser-364) is required for the polarization of the actin cytoskeleton. Phosphorylation probably activates the myosin-I ATPase activity.

It localises to the cytoplasm. It is found in the cytoskeleton. The protein localises to the actin patch. Functionally, type-I myosin implicated in the organization of the actin cytoskeleton. Required for proper actin cytoskeleton polarization. At the cell cortex, assembles in patch-like structures together with proteins from the actin-polymerizing machinery and promotes actin assembly. Functions as actin nucleation-promoting factor (NPF) for the Arp2/3 complex. The chain is Myosin-1 (MYO1) from Debaryomyces hansenii (strain ATCC 36239 / CBS 767 / BCRC 21394 / JCM 1990 / NBRC 0083 / IGC 2968) (Yeast).